A 206-amino-acid chain; its full sequence is Stage III sporulation protein AF (206 aa).

2 consecutive transmembrane segments (helical) span residues 1-21 (MSFL…AIVI) and 34-54 (AKMV…FKLF).

The protein resides in the cell membrane. The chain is Stage III sporulation protein AF (spoIIIAF) from Bacillus subtilis (strain 168).